The chain runs to 469 residues: Cytosolic beta-glucosidase (469 aa).

Residues Q17, H120, and N164 each contribute to the substrate site. E165 (proton donor) is an active-site residue. Y309 is a substrate binding site. E373 functions as the Nucleophile in the catalytic mechanism. Substrate contacts are provided by residues W417 and 424-425 (EW).

The protein belongs to the glycosyl hydrolase 1 family. Klotho subfamily. In terms of assembly, may interact with NEU2. In terms of processing, the N-terminus is blocked. In terms of tissue distribution, present in small intestine (at protein level). Expressed in liver, small intestine, colon, spleen and kidney. Down-regulated in renal cell carcinomas and hepatocellular carcinomas.

It is found in the cytoplasm. The protein localises to the cytosol. The catalysed reaction is Hydrolysis of terminal, non-reducing beta-D-glucosyl residues with release of beta-D-glucose.. The enzyme catalyses a beta-D-glucosyl-(1&lt;-&gt;1')-N-acylsphing-4-enine + H2O = an N-acylsphing-4-enine + D-glucose. It carries out the reaction a beta-D-galactosyl-(1&lt;-&gt;1')-N-acylsphing-4-enine + H2O = an N-acylsphing-4-enine + D-galactose. It catalyses the reaction beta-D-glucosyl-(1&lt;-&gt;1)-sphing-4-enine + H2O = sphing-4-enine + D-glucose. The catalysed reaction is beta-D-glucosyl-(1&lt;-&gt;1)-N-octadecanoylsphing-4-enine + H2O = N-octadecanoylsphing-4-enine + D-glucose. The enzyme catalyses beta-D-galactosyl-(1&lt;-&gt;1)-sphing-4-enine + H2O = sphing-4-enine + D-galactose. It carries out the reaction beta-D-galactosyl-(1&lt;-&gt;1')-N-octadecanoylsphing-4-enine + H2O = N-octadecanoylsphing-4-enine + D-galactose. It catalyses the reaction a beta-D-xylosyl-(1&lt;-&gt;1')-N-acylsphing-4-enine + cholesterol = cholesteryl 3-beta-D-xyloside + an N-acylsphing-4-enine. Its activity is regulated as follows. Inhibited by 2,4-dinitrophenyl-2-fluoro-2-deoxy-beta-D-glucopyranoside. Inhibited by sodium taurocholate. Inhibited by alpha-1-C-nonyl-DIX/AnDIX. The glucosylceramidase activity is slightly inhibited by conduritol B epoxide/CBE while the galactosylceramidase activity is not. Its function is as follows. Neutral cytosolic beta-glycosidase with a broad substrate specificity that could play a role in the catabolism of glycosylceramides. Has a significant glucosylceramidase activity in vitro. However, that activity is relatively low and its significance in vivo is not clear. Hydrolyzes galactosylceramides/GalCers, glucosylsphingosines/GlcSphs and galactosylsphingosines/GalSphs. However, the in vivo relevance of these activities is unclear. It can also hydrolyze a broad variety of dietary glycosides including phytoestrogens, flavonols, flavones, flavanones and cyanogens in vitro and could therefore play a role in the metabolism of xenobiotics. Possesses transxylosylase activity in vitro using xylosylated ceramides/XylCers (such as beta-D-xylosyl-(1&lt;-&gt;1')-N-acylsphing-4-enine) as xylosyl donors and cholesterol as acceptor. Could also play a role in the catabolism of cytosolic sialyl free N-glycans. The protein is Cytosolic beta-glucosidase of Homo sapiens (Human).